Reading from the N-terminus, the 156-residue chain is Small ribosomal subunit protein uS7A/uS7B (156 aa).

Belongs to the universal ribosomal protein uS7 family. In terms of assembly, part of the 30S ribosomal subunit. Contacts proteins S9 and S11.

Its function is as follows. One of the primary rRNA binding proteins, it binds directly to 16S rRNA where it nucleates assembly of the head domain of the 30S subunit. Is located at the subunit interface close to the decoding center, probably blocks exit of the E-site tRNA. The protein is Small ribosomal subunit protein uS7A/uS7B of Bartonella bacilliformis (strain ATCC 35685 / KC583 / Herrer 020/F12,63).